Consider the following 306-residue polypeptide: ATP synthase gamma chain (306 aa).

This sequence belongs to the ATPase gamma chain family. As to quaternary structure, F-type ATPases have 2 components, CF(1) - the catalytic core - and CF(0) - the membrane proton channel. CF(1) has five subunits: alpha(3), beta(3), gamma(1), delta(1), epsilon(1). CF(0) has three main subunits: a, b and c.

It is found in the cell membrane. Its function is as follows. Produces ATP from ADP in the presence of a proton gradient across the membrane. The gamma chain is believed to be important in regulating ATPase activity and the flow of protons through the CF(0) complex. The chain is ATP synthase gamma chain from Bifidobacterium adolescentis (strain ATCC 15703 / DSM 20083 / NCTC 11814 / E194a).